A 127-amino-acid chain; its full sequence is UPF0102 protein ERGA_CDS_00540 (127 aa).

Belongs to the UPF0102 family.

The chain is UPF0102 protein ERGA_CDS_00540 from Ehrlichia ruminantium (strain Gardel).